The primary structure comprises 628 residues: Alpha-L-arabinofuranosidase A (628 aa).

Residues M1–G25 form the signal peptide. Residues N36, N51, N74, N152, N171, N260, N359, and N493 are each glycosylated (N-linked (GlcNAc...) asparagine).

The protein belongs to the glycosyl hydrolase 51 family.

Its subcellular location is the secreted. The enzyme catalyses Hydrolysis of terminal non-reducing alpha-L-arabinofuranoside residues in alpha-L-arabinosides.. Its pathway is glycan metabolism; L-arabinan degradation. In terms of biological role, alpha-L-arabinofuranosidase involved in the degradation of arabinoxylan, a major component of plant hemicellulose. Acts only on small linear 1,5-alpha-linked L-arabinofuranosyl oligosaccharides. This is Alpha-L-arabinofuranosidase A (abfA) from Aspergillus kawachii (strain NBRC 4308) (White koji mold).